The chain runs to 137 residues: Basic phospholipase A2 homolog Bsc-K49 (137 aa).

The N-terminal stretch at 1–16 is a signal peptide; that stretch reads MRTLWIVAVLLVGVEG. Intrachain disulfides connect Cys-42–Cys-131, Cys-44–Cys-60, Cys-59–Cys-111, Cys-65–Cys-137, Cys-66–Cys-104, Cys-73–Cys-97, and Cys-91–Cys-102. An important for membrane-damaging activities in eukaryotes and bacteria; heparin-binding region spans residues 121 to 133; the sequence is KNYKITMKMFCKK.

The protein belongs to the phospholipase A2 family. Group II subfamily. K49 sub-subfamily. Homodimer; non-covalently linked. As to expression, expressed by the venom gland.

Its subcellular location is the secreted. In terms of biological role, snake venom phospholipase A2 that lacks enzymatic activity. Is myotoxic, and displays edema-inducing activities. A model of myotoxic mechanism has been proposed: an apo Lys49-PLA2 is activated by the entrance of a hydrophobic molecule (e.g. fatty acid) at the hydrophobic channel of the protein leading to a reorientation of a monomer. This reorientation causes a transition between 'inactive' to 'active' states, causing alignment of C-terminal and membrane-docking sites (MDoS) side-by-side and putting the membrane-disruption sites (MDiS) in the same plane, exposed to solvent and in a symmetric position for both monomers. The MDoS region stabilizes the toxin on membrane by the interaction of charged residues with phospholipid head groups. Subsequently, the MDiS region destabilizes the membrane with penetration of hydrophobic residues. This insertion causes a disorganization of the membrane, allowing an uncontrolled influx of ions (i.e. calcium and sodium), and eventually triggering irreversible intracellular alterations and cell death. This is Basic phospholipase A2 homolog Bsc-K49 from Bothriechis schlegelii (Eyelash palm pitviper).